The chain runs to 107 residues: Large ribosomal subunit protein uL24 (107 aa).

This sequence belongs to the universal ribosomal protein uL24 family. In terms of assembly, part of the 50S ribosomal subunit.

Functionally, one of two assembly initiator proteins, it binds directly to the 5'-end of the 23S rRNA, where it nucleates assembly of the 50S subunit. One of the proteins that surrounds the polypeptide exit tunnel on the outside of the subunit. The polypeptide is Large ribosomal subunit protein uL24 (Streptomyces griseus subsp. griseus (strain JCM 4626 / CBS 651.72 / NBRC 13350 / KCC S-0626 / ISP 5235)).